Here is a 282-residue protein sequence, read N- to C-terminus: 2-dehydro-3-deoxyphosphooctonate aldolase (282 aa).

The protein belongs to the KdsA family.

It localises to the cytoplasm. It catalyses the reaction D-arabinose 5-phosphate + phosphoenolpyruvate + H2O = 3-deoxy-alpha-D-manno-2-octulosonate-8-phosphate + phosphate. The protein operates within carbohydrate biosynthesis; 3-deoxy-D-manno-octulosonate biosynthesis; 3-deoxy-D-manno-octulosonate from D-ribulose 5-phosphate: step 2/3. Its pathway is bacterial outer membrane biogenesis; lipopolysaccharide biosynthesis. This is 2-dehydro-3-deoxyphosphooctonate aldolase from Bordetella avium (strain 197N).